Consider the following 232-residue polypeptide: E3 ubiquitin-protein ligase RNF125 (232 aa).

Polar residues predominate over residues 1-10 (MGSVLSSDSG). Positions 1–27 (MGSVLSSDSGKSAPPSATPRALERRGD) are disordered. Gly2 is lipidated: N-myristoyl glycine. Residues Cys37 and Cys40 each coordinate Zn(2+). The RING-type zinc-finger motif lies at 37 to 76 (CAVCLEVLHQPVRTRCGHVFCRSCIATSLKNNKWTCPYCR). The interval 43-45 (VLH) is interaction with the C2HC RNF-type zinc finger. The Zn(2+) site is built by Cys52, His54, Cys57, Cys60, Cys72, Cys75, Cys100, and Cys103. The C2HC RNF-type zinc-finger motif lies at 100-119 (CAECDTLVCLGEMRAHIRTC). Positions 109 to 113 (LGEMR) are interaction with the RING-type zinc finger. 2 residues coordinate Zn(2+): His115 and Cys119. Residues 120–128 (QKYIDKYGP) are linker region. The required for interaction with ubiquitin and for autoubiquitination stretch occupies residues 210–224 (EEALIRRVLDRSLLE).

As to quaternary structure, interacts with UBE2D1. Interacts with VCP/p97; leading to recruit RNF125 to RIGI and promote ubiquitination of RIGI. In terms of processing, autoubiquitinated, leading to its subsequent proteasomal degradation.

Its subcellular location is the golgi apparatus membrane. It carries out the reaction S-ubiquitinyl-[E2 ubiquitin-conjugating enzyme]-L-cysteine + [acceptor protein]-L-lysine = [E2 ubiquitin-conjugating enzyme]-L-cysteine + N(6)-ubiquitinyl-[acceptor protein]-L-lysine.. It functions in the pathway protein modification; protein ubiquitination. Its function is as follows. E3 ubiquitin-protein ligase that mediates ubiquitination and subsequent proteasomal degradation of target proteins, such as RIGI, MAVS/IPS1, IFIH1/MDA5, JAK1 and p53/TP53. Acts as a negative regulator of type I interferon production by mediating ubiquitination of RIGI at 'Lys-181', leading to RIGI degradation. Mediates ubiquitination and subsequent degradation of p53/TP53. Mediates ubiquitination and subsequent degradation of JAK1. Acts as a positive regulator of T-cell activation. This is E3 ubiquitin-protein ligase RNF125 (RNF125) from Macaca fascicularis (Crab-eating macaque).